The primary structure comprises 214 residues: Dynein axonemal assembly factor 6 (214 aa).

Disordered stretches follow at residues 1–22 (MESE…QNVD) and 34–68 (ALSK…NIGP).

This sequence belongs to the PIH1 family. In terms of assembly, interacts with HSPA1A/B and HSP90AA1. Interacts with DNAAF2 and DNAAF4. Interacts wuth DNAI2. Expressed in testis, small intestine, prostate, adrenal gland, spleen, lung, bladder, breast and ovary. Expressed in ciliated epithelial cells.

It is found in the cytoplasm. Its subcellular location is the golgi apparatus. The protein localises to the trans-Golgi network. Plays a role in cytoplasmic pre-assembly of axonemal dynein. The sequence is that of Dynein axonemal assembly factor 6 from Homo sapiens (Human).